A 535-amino-acid polypeptide reads, in one-letter code: Inositol 1,4,5-trisphosphate receptor-interacting protein-like 2 (535 aa).

An N-terminal signal peptide occupies residues 1-32; it reads MSVRYTLNLRVFWPLVTGLCTALVCLYHALRS. Over 33-43 the chain is Extracellular; that stretch reads SEDARAESPDG. A helical membrane pass occupies residues 44–64; it reads ADSGFPLLKVAILLLLGYILL. The Cytoplasmic segment spans residues 65–535; the sequence is RCRHAIRQRL…RIQGSPEDEP (471 aa). S139 bears the Phosphoserine mark.

The protein belongs to the ITPRIP family.

The protein localises to the membrane. This chain is Inositol 1,4,5-trisphosphate receptor-interacting protein-like 2 (Itpripl2), found in Mus musculus (Mouse).